The primary structure comprises 688 residues: Elongation factor G (688 aa).

The tr-type G domain occupies 8–282; the sequence is INFRNFGIMA…AVVDFLPSPV (275 aa). Residues 17-24, 81-85, and 135-138 contribute to the GTP site; these read AHIDAGKT, DTPGH, and NKMD.

This sequence belongs to the TRAFAC class translation factor GTPase superfamily. Classic translation factor GTPase family. EF-G/EF-2 subfamily.

The protein localises to the cytoplasm. In terms of biological role, catalyzes the GTP-dependent ribosomal translocation step during translation elongation. During this step, the ribosome changes from the pre-translocational (PRE) to the post-translocational (POST) state as the newly formed A-site-bound peptidyl-tRNA and P-site-bound deacylated tRNA move to the P and E sites, respectively. Catalyzes the coordinated movement of the two tRNA molecules, the mRNA and conformational changes in the ribosome. The chain is Elongation factor G (fusA) from Mycoplasma pneumoniae (strain ATCC 29342 / M129 / Subtype 1) (Mycoplasmoides pneumoniae).